A 929-amino-acid polypeptide reads, in one-letter code: Isoleucine--tRNA ligase (929 aa).

The short motif at 57-67 (PYANGNIHVGH) is the 'HIGH' region element. Glu-554 contributes to the L-isoleucyl-5'-AMP binding site. Positions 595 to 599 (KMSKS) match the 'KMSKS' region motif. Lys-598 serves as a coordination point for ATP. Residues Cys-888, Cys-891, Cys-908, and Cys-911 each coordinate Zn(2+).

It belongs to the class-I aminoacyl-tRNA synthetase family. IleS type 1 subfamily. As to quaternary structure, monomer. Zn(2+) serves as cofactor.

The protein localises to the cytoplasm. It carries out the reaction tRNA(Ile) + L-isoleucine + ATP = L-isoleucyl-tRNA(Ile) + AMP + diphosphate. Catalyzes the attachment of isoleucine to tRNA(Ile). As IleRS can inadvertently accommodate and process structurally similar amino acids such as valine, to avoid such errors it has two additional distinct tRNA(Ile)-dependent editing activities. One activity is designated as 'pretransfer' editing and involves the hydrolysis of activated Val-AMP. The other activity is designated 'posttransfer' editing and involves deacylation of mischarged Val-tRNA(Ile). The protein is Isoleucine--tRNA ligase of Streptococcus thermophilus (strain CNRZ 1066).